The chain runs to 117 residues: Large ribosomal subunit protein bL19 (117 aa).

This sequence belongs to the bacterial ribosomal protein bL19 family.

Its function is as follows. This protein is located at the 30S-50S ribosomal subunit interface and may play a role in the structure and function of the aminoacyl-tRNA binding site. The protein is Large ribosomal subunit protein bL19 of Alkalilimnicola ehrlichii (strain ATCC BAA-1101 / DSM 17681 / MLHE-1).